The primary structure comprises 278 residues: NAD-capped RNA hydrolase NudC (278 aa).

Arg-84 is a substrate binding site. 2 residues coordinate Zn(2+): Cys-114 and Cys-117. Glu-127 contributes to the substrate binding site. Cys-132 and Cys-135 together coordinate Zn(2+). Tyr-140 is a binding site for substrate. In terms of domain architecture, Nudix hydrolase spans 141-265 (PRLSPSMIVL…IARHLIDLYL (125 aa)). 3 residues coordinate a divalent metal cation: Ala-174, Glu-190, and Glu-194. Residues 175-196 (GFVEAGESVEQCVVREVREEVG) carry the Nudix box motif. Substrate is bound at residue 208-215 (QNWPFPHS). A divalent metal cation is bound at residue Glu-235. Ala-257 contributes to the substrate binding site.

Belongs to the Nudix hydrolase family. NudC subfamily. Homodimer. It depends on Mg(2+) as a cofactor. The cofactor is Mn(2+). Requires Zn(2+) as cofactor.

It catalyses the reaction a 5'-end NAD(+)-phospho-ribonucleoside in mRNA + H2O = a 5'-end phospho-adenosine-phospho-ribonucleoside in mRNA + beta-nicotinamide D-ribonucleotide + 2 H(+). The catalysed reaction is NAD(+) + H2O = beta-nicotinamide D-ribonucleotide + AMP + 2 H(+). The enzyme catalyses NADH + H2O = reduced beta-nicotinamide D-ribonucleotide + AMP + 2 H(+). MRNA decapping enzyme that specifically removes the nicotinamide adenine dinucleotide (NAD) cap from a subset of mRNAs by hydrolyzing the diphosphate linkage to produce nicotinamide mononucleotide (NMN) and 5' monophosphate mRNA. The NAD-cap is present at the 5'-end of some mRNAs and stabilizes RNA against 5'-processing. Has preference for mRNAs with a 5'-end purine. Catalyzes the hydrolysis of a broad range of dinucleotide pyrophosphates. The sequence is that of NAD-capped RNA hydrolase NudC from Pseudomonas aeruginosa (strain ATCC 15692 / DSM 22644 / CIP 104116 / JCM 14847 / LMG 12228 / 1C / PRS 101 / PAO1).